Reading from the N-terminus, the 190-residue chain is dTTP/UTP pyrophosphatase (190 aa).

The active-site Proton acceptor is the aspartate 70.

Belongs to the Maf family. YhdE subfamily. A divalent metal cation is required as a cofactor.

It localises to the cytoplasm. The catalysed reaction is dTTP + H2O = dTMP + diphosphate + H(+). It carries out the reaction UTP + H2O = UMP + diphosphate + H(+). Nucleoside triphosphate pyrophosphatase that hydrolyzes dTTP and UTP. May have a dual role in cell division arrest and in preventing the incorporation of modified nucleotides into cellular nucleic acids. The sequence is that of dTTP/UTP pyrophosphatase from Gloeobacter violaceus (strain ATCC 29082 / PCC 7421).